The chain runs to 416 residues: MNLQEYVLNKAKKAKDTSRKFSSSSETDKIRILNYISEELMANKNYIISENQKDVESAKNTGMSSSLLDRLLLNQERITKMAEGVQKVAQLQSSVGNISQMWKRPNGLMIGKMVVPLGVIAIIYESRPNVTVDAAALCIKSGNCVVLRGGSEAIHSNNALVKIIHQAIERAGFSKDIVQFIEITDRKAVDELMKLYEYIDVLIPRGGPSLIKNTVENSMIPVIQTGAGNCHVYVDRQADLEKALKIVENAKISRPSVCNAAEKLLVHKDIAEEFLPKIYTLFEKKVELRGCEKTLKIIPQMKAAQEEDWSTEYLDYIMAVKIVDSTEEAINHINKYSTKHSEAIITENYTIAQKFLNEIDSAAVYVNASTRFTDGEEFGFGAEMGISTQKLHVRGPIGINELTTTKYIILGNGQVR.

Belongs to the gamma-glutamyl phosphate reductase family.

The protein localises to the cytoplasm. It carries out the reaction L-glutamate 5-semialdehyde + phosphate + NADP(+) = L-glutamyl 5-phosphate + NADPH + H(+). It functions in the pathway amino-acid biosynthesis; L-proline biosynthesis; L-glutamate 5-semialdehyde from L-glutamate: step 2/2. Its function is as follows. Catalyzes the NADPH-dependent reduction of L-glutamate 5-phosphate into L-glutamate 5-semialdehyde and phosphate. The product spontaneously undergoes cyclization to form 1-pyrroline-5-carboxylate. This is Gamma-glutamyl phosphate reductase from Petrotoga mobilis (strain DSM 10674 / SJ95).